Consider the following 258-residue polypeptide: Ferredoxin--NADP reductase (258 aa).

Positions 2 to 102 constitute an FAD-binding FR-type domain; sequence SNLNVERVLS…RKPTGTLVTS (101 aa). An NADP(+)-binding site is contributed by Asp17. Residues 51–54, 67–69, 74–77, and Thr117 contribute to the FAD site; these read RAYS, FSI, and GPLT. Residues 144–145, 181–182, and Arg190 each bind NADP(+); these read VR and TR. 254 to 258 contributes to the FAD binding site; that stretch reads AFVEK.

This sequence belongs to the ferredoxin--NADP reductase type 1 family. As to quaternary structure, monomer. FAD serves as cofactor.

It catalyses the reaction 2 reduced [2Fe-2S]-[ferredoxin] + NADP(+) + H(+) = 2 oxidized [2Fe-2S]-[ferredoxin] + NADPH. In terms of biological role, transports electrons between ferredoxin and NADPH. This is Ferredoxin--NADP reductase from Azotobacter vinelandii.